Here is a 92-residue protein sequence, read N- to C-terminus: Dolichol-phosphate mannosyltransferase subunit 3 (92 aa).

2 helical membrane-spanning segments follow: residues 8 to 28 (LWGL…ALGL) and 37 to 57 (VLWP…LGTV).

The protein belongs to the DPM3 family. Component of the dolichol-phosphate mannose (DPM) synthase complex composed of DPM1, DPM2 and DPM3; within the complex, associates with DPM1 via its C-terminal domain and with DPM2 via its N-terminal portion. This interaction stabilizes DPM1 protein.

It is found in the endoplasmic reticulum membrane. It participates in protein modification; protein glycosylation. Its function is as follows. Stabilizer subunit of the dolichol-phosphate mannose (DPM) synthase complex; tethers catalytic subunit DPM1 to the endoplasmic reticulum. This Homo sapiens (Human) protein is Dolichol-phosphate mannosyltransferase subunit 3 (DPM3).